We begin with the raw amino-acid sequence, 121 residues long: Large ribosomal subunit protein bL12 (121 aa).

It belongs to the bacterial ribosomal protein bL12 family. Homodimer. Part of the ribosomal stalk of the 50S ribosomal subunit. Forms a multimeric L10(L12)X complex, where L10 forms an elongated spine to which 2 to 4 L12 dimers bind in a sequential fashion. Binds GTP-bound translation factors.

Its function is as follows. Forms part of the ribosomal stalk which helps the ribosome interact with GTP-bound translation factors. Is thus essential for accurate translation. The polypeptide is Large ribosomal subunit protein bL12 (Lactococcus lactis subsp. cremoris (strain MG1363)).